The primary structure comprises 120 residues: UPF0102 protein CBU_1742 (120 aa).

It belongs to the UPF0102 family.

The sequence is that of UPF0102 protein CBU_1742 from Coxiella burnetii (strain RSA 493 / Nine Mile phase I).